We begin with the raw amino-acid sequence, 435 residues long: 5-methylthioadenosine/S-adenosylhomocysteine deaminase (435 aa).

His-65 and His-67 together coordinate Zn(2+). Substrate-binding residues include Glu-94, Arg-150, and His-189. Position 216 (His-216) interacts with Zn(2+). The substrate site is built by Glu-219 and Asp-304. Residue Asp-304 participates in Zn(2+) binding.

The protein belongs to the metallo-dependent hydrolases superfamily. MTA/SAH deaminase family. Requires Zn(2+) as cofactor.

The enzyme catalyses S-adenosyl-L-homocysteine + H2O + H(+) = S-inosyl-L-homocysteine + NH4(+). It catalyses the reaction S-methyl-5'-thioadenosine + H2O + H(+) = S-methyl-5'-thioinosine + NH4(+). Functionally, catalyzes the deamination of 5-methylthioadenosine and S-adenosyl-L-homocysteine into 5-methylthioinosine and S-inosyl-L-homocysteine, respectively. Is also able to deaminate adenosine. In Bacillus cereus (strain ATCC 10987 / NRS 248), this protein is 5-methylthioadenosine/S-adenosylhomocysteine deaminase.